Here is a 206-residue protein sequence, read N- to C-terminus: Proteasome subunit beta 1 (206 aa).

The propeptide at 1–5 is removed in mature form; by autocatalysis; it reads MLMKG. The active-site Nucleophile is the threonine 6.

Belongs to the peptidase T1B family. The 20S proteasome core is composed of 14 alpha and 14 beta subunits that assemble into four stacked heptameric rings, resulting in a barrel-shaped structure. The two inner rings, each composed of seven catalytic beta subunits, are sandwiched by two outer rings, each composed of seven alpha subunits. The catalytic chamber with the active sites is on the inside of the barrel. Has a gated structure, the ends of the cylinder being occluded by the N-termini of the alpha-subunits. Is capped at one or both ends by the proteasome regulatory ATPase, PAN.

It is found in the cytoplasm. The catalysed reaction is Cleavage of peptide bonds with very broad specificity.. Its activity is regulated as follows. The formation of the proteasomal ATPase PAN-20S proteasome complex, via the docking of the C-termini of PAN into the intersubunit pockets in the alpha-rings, triggers opening of the gate for substrate entry. Interconversion between the open-gate and close-gate conformations leads to a dynamic regulation of the 20S proteasome proteolysis activity. Its function is as follows. Component of the proteasome core, a large protease complex with broad specificity involved in protein degradation. The sequence is that of Proteasome subunit beta 1 from Korarchaeum cryptofilum (strain OPF8).